The following is a 145-amino-acid chain: uncharacterized protein (145 aa).

The next 3 helical transmembrane spans lie at 3-23 (VGII…GIGG), 83-103 (YVID…YLVP), and 105-125 (LSLL…MLWI).

It localises to the cell membrane. This is an uncharacterized protein from Methanocaldococcus jannaschii (strain ATCC 43067 / DSM 2661 / JAL-1 / JCM 10045 / NBRC 100440) (Methanococcus jannaschii).